Consider the following 243-residue polypeptide: Probable phosphatase CLD_1129 (243 aa).

Zn(2+) contacts are provided by H8, H10, H16, H41, E74, H102, H132, D192, and H194.

Belongs to the PHP family. Zn(2+) serves as cofactor.

In Clostridium botulinum (strain Okra / Type B1), this protein is Probable phosphatase CLD_1129.